Reading from the N-terminus, the 656-residue chain is Protein EMBRYO SAC DEVELOPMENT ARREST 30 (656 aa).

The helical; Signal-anchor for type II membrane protein transmembrane segment at 9-29 threads the bilayer; that stretch reads WIALFVLILSMGSLVVHLSMT. An N-linked (GlcNAc...) asparagine glycan is attached at asparagine 119. Residues 381–426 form a disordered region; that stretch reads LSELVGPETPLPENTYKMPPRKSDKQLKEEWNKAGPRPRPLPPPPD. A compositionally biased stretch (basic and acidic residues) spans 401 to 412; sequence RKSDKQLKEEWN. The span at 417 to 426 shows a compositional bias: pro residues; the sequence is RPRPLPPPPD. Residues asparagine 444, asparagine 522, asparagine 534, and asparagine 544 are each glycosylated (N-linked (GlcNAc...) asparagine). The interval 631 to 656 is disordered; sequence SETEEEFAKSKVASAFDQDEEWDPND. The span at 647–656 shows a compositional bias: acidic residues; the sequence is DQDEEWDPND.

The protein belongs to the glycosyltransferase GT106 family.

Its subcellular location is the membrane. It functions in the pathway glycan metabolism. In Arabidopsis thaliana (Mouse-ear cress), this protein is Protein EMBRYO SAC DEVELOPMENT ARREST 30.